A 226-amino-acid polypeptide reads, in one-letter code: Flagellar L-ring protein (226 aa).

Residues 1 to 15 form the signal peptide; that stretch reads MKRLAVSILCLALAG. C16 is lipidated: N-palmitoyl cysteine. A lipid anchor (S-diacylglycerol cysteine) is attached at C16.

The protein belongs to the FlgH family. In terms of assembly, the basal body constitutes a major portion of the flagellar organelle and consists of four rings (L,P,S, and M) mounted on a central rod.

The protein resides in the cell outer membrane. It is found in the bacterial flagellum basal body. In terms of biological role, assembles around the rod to form the L-ring and probably protects the motor/basal body from shearing forces during rotation. The chain is Flagellar L-ring protein from Geobacter metallireducens (strain ATCC 53774 / DSM 7210 / GS-15).